Consider the following 257-residue polypeptide: Small ribosomal subunit protein uS2 (257 aa).

This sequence belongs to the universal ribosomal protein uS2 family.

In Trichlorobacter lovleyi (strain ATCC BAA-1151 / DSM 17278 / SZ) (Geobacter lovleyi), this protein is Small ribosomal subunit protein uS2.